The chain runs to 492 residues: Probable Xaa-Pro aminopeptidase ACLA_020440 (492 aa).

Mn(2+) is bound by residues Asp-272, Asp-283, Glu-421, and Glu-460.

This sequence belongs to the peptidase M24B family. The cofactor is Mn(2+).

The enzyme catalyses Release of any N-terminal amino acid, including proline, that is linked to proline, even from a dipeptide or tripeptide.. Its function is as follows. Catalyzes the removal of a penultimate prolyl residue from the N-termini of peptides. This Aspergillus clavatus (strain ATCC 1007 / CBS 513.65 / DSM 816 / NCTC 3887 / NRRL 1 / QM 1276 / 107) protein is Probable Xaa-Pro aminopeptidase ACLA_020440.